Here is a 218-residue protein sequence, read N- to C-terminus: Phosphoenolpyruvate guanylyltransferase (218 aa).

The phosphoenolpyruvate site is built by T151, G166, and S169.

Belongs to the CofC family.

The enzyme catalyses phosphoenolpyruvate + GTP + H(+) = enolpyruvoyl-2-diphospho-5'-guanosine + diphosphate. It functions in the pathway cofactor biosynthesis; coenzyme F420 biosynthesis. Guanylyltransferase that catalyzes the activation of phosphoenolpyruvate (PEP) as enolpyruvoyl-2-diphospho-5'-guanosine, via the condensation of PEP with GTP. It is involved in the biosynthesis of coenzyme F420, a hydride carrier cofactor. The sequence is that of Phosphoenolpyruvate guanylyltransferase from Mycobacterium sp. (strain KMS).